The chain runs to 100 residues: Transcription and mRNA export factor SUS1 (100 aa).

The protein belongs to the ENY2 family. Component of the nuclear pore complex (NPC)-associated TREX-2 complex (transcription and export complex 2), composed of at least SUS1, SAC3, THP1, SEM1, and CDC31. TREX-2 contains 2 SUS1 chains. The TREX-2 complex interacts with the nucleoporin NUP1. Component of the 1.8 MDa SAGA transcription coactivator-HAT complex. SAGA is built of 5 distinct domains with specialized functions. Within the SAGA complex, SUS1, SGF11, SGF73 and UBP8 form an additional subcomplex of SAGA called the DUB module (deubiquitination module). Interacts directly with THP1, SAC3, SGF11, and with the RNA polymerase II.

The protein resides in the nucleus. The protein localises to the nucleoplasm. Its subcellular location is the cytoplasm. It is found in the P-body. Involved in mRNA export coupled transcription activation by association with both the TREX-2 and the SAGA complexes. At the promoters, SAGA is required for recruitment of the basal transcription machinery. It influences RNA polymerase II transcriptional activity through different activities such as TBP interaction and promoter selectivity, interaction with transcription activators, and chromatin modification through histone acetylation and deubiquitination. Within the SAGA complex, participates in a subcomplex required for deubiquitination of H2B and for the maintenance of steady-state H3 methylation levels. The TREX-2 complex functions in docking export-competent ribonucleoprotein particles (mRNPs) to the nuclear entrance of the nuclear pore complex (nuclear basket). TREX-2 participates in mRNA export and accurate chromatin positioning in the nucleus by tethering genes to the nuclear periphery. May also be involved in cytoplasmic mRNA decay by interaction with components of P-bodies. This Candida glabrata (strain ATCC 2001 / BCRC 20586 / JCM 3761 / NBRC 0622 / NRRL Y-65 / CBS 138) (Yeast) protein is Transcription and mRNA export factor SUS1.